The chain runs to 177 residues: ATP synthase subunit delta (177 aa).

This sequence belongs to the ATPase delta chain family. In terms of assembly, F-type ATPases have 2 components, F(1) - the catalytic core - and F(0) - the membrane proton channel. F(1) has five subunits: alpha(3), beta(3), gamma(1), delta(1), epsilon(1). F(0) has three main subunits: a(1), b(2) and c(10-14). The alpha and beta chains form an alternating ring which encloses part of the gamma chain. F(1) is attached to F(0) by a central stalk formed by the gamma and epsilon chains, while a peripheral stalk is formed by the delta and b chains.

The protein localises to the cell inner membrane. F(1)F(0) ATP synthase produces ATP from ADP in the presence of a proton or sodium gradient. F-type ATPases consist of two structural domains, F(1) containing the extramembraneous catalytic core and F(0) containing the membrane proton channel, linked together by a central stalk and a peripheral stalk. During catalysis, ATP synthesis in the catalytic domain of F(1) is coupled via a rotary mechanism of the central stalk subunits to proton translocation. Its function is as follows. This protein is part of the stalk that links CF(0) to CF(1). It either transmits conformational changes from CF(0) to CF(1) or is implicated in proton conduction. The protein is ATP synthase subunit delta of Citrobacter koseri (strain ATCC BAA-895 / CDC 4225-83 / SGSC4696).